Here is a 207-residue protein sequence, read N- to C-terminus: Dephospho-CoA kinase (207 aa).

The 201-residue stretch at 4–204 (VVGLTGGIGS…HLYLQFAEIF (201 aa)) folds into the DPCK domain. 12-17 (GSGKST) is an ATP binding site.

It belongs to the CoaE family.

The protein resides in the cytoplasm. It carries out the reaction 3'-dephospho-CoA + ATP = ADP + CoA + H(+). It participates in cofactor biosynthesis; coenzyme A biosynthesis; CoA from (R)-pantothenate: step 5/5. In terms of biological role, catalyzes the phosphorylation of the 3'-hydroxyl group of dephosphocoenzyme A to form coenzyme A. This Aggregatibacter actinomycetemcomitans (Actinobacillus actinomycetemcomitans) protein is Dephospho-CoA kinase.